Here is a 214-residue protein sequence, read N- to C-terminus: Adenylate kinase (214 aa).

10 to 15 (GAGKGT) provides a ligand contact to ATP. Residues 30–59 (STGDMFRDHKARGTELGKTVQAIMDAGGLV) form an NMP region. Residues Thr-31, Arg-36, 57–59 (GLV), 85–88 (GYPR), and Gln-92 each bind AMP. Residues 126-163 (GRRSCPKCGAVYHVSANPPRRMGYCDRDDAGLVQRDDD) are LID. Arg-127 provides a ligand contact to ATP. Zn(2+) contacts are provided by Cys-130 and Cys-133. An ATP-binding site is contributed by 136 to 137 (VY). The Zn(2+) site is built by Cys-150 and Asp-153. AMP-binding residues include Arg-160 and Arg-171. Gly-199 lines the ATP pocket.

Belongs to the adenylate kinase family. As to quaternary structure, monomer.

The protein localises to the cytoplasm. It catalyses the reaction AMP + ATP = 2 ADP. It participates in purine metabolism; AMP biosynthesis via salvage pathway; AMP from ADP: step 1/1. Catalyzes the reversible transfer of the terminal phosphate group between ATP and AMP. Plays an important role in cellular energy homeostasis and in adenine nucleotide metabolism. The protein is Adenylate kinase of Anaeromyxobacter sp. (strain Fw109-5).